Consider the following 688-residue polypeptide: Large T antigen (688 aa).

Position 1 is an N-acetylmethionine; by host (Met1). The region spanning 12 to 75 is the J domain; it reads ELMDLLGLDR…VKVAHQPDFG (64 aa). The LXCXE motif signature appears at 105–109; that stretch reads LFCHE. Phosphoserine; by host is present on residues Ser114, Ser121, and Ser124. Residues 115 to 135 are disordered; the sequence is DDENTGSQHSTPPKKKKKVED. Position 125 is a phosphothreonine; by host (Thr125). A Nuclear localization signal motif is present at residues 126–133; the sequence is PPKKKKKV. The segment at residues 140–255 is a DNA-binding region (T-ag OBD); it reads PVDLHAFLSQ…EESIQGGLKE (116 aa). Residues 266 to 358 form a T-ag D1-type zinc finger; it reads TKQVSWKLVT…QRVDSIHMTR (93 aa). Cys303, Cys306, His314, and His318 together coordinate Zn(2+). The SF3 helicase domain occupies 401-561; the sequence is QMDTVIYDFL…AYLRKSLSCS (161 aa). Position 427-434 (427-434) interacts with ATP; the sequence is GPIDSGKT. The interval 632-658 is disordered; the sequence is EEDSEAEDSGHGSSTESQSQCFSQVSE. Positions 642 to 658 are enriched in polar residues; it reads HGSSTESQSQCFSQVSE. At Ser660 the chain carries Phosphoserine; by host. At Lys680 the chain carries N6-acetyllysine; by host. Residue Thr684 is modified to Phosphothreonine; by host.

Forms homohexamers in the presence of ATP. Interacts with host HDAC1. Interacts (via LXCXE domain) with host RB1; the interaction induces the aberrant dissociation of RB1-E2F1 complex thereby disrupting RB1's activity. Interacts (via LXCXE domain) with host pRB-related proteins RBL1 and RBL2. Interacts (via C-terminus) with host TOP1 and POLA1 allowing DNA replication. Interacts with host TP53, inhibiting TP53 binding to DNA. Interacts with host preinitiation complex components TBP, TFIIA and TFIID to regulate transcription initiation. Mg(2+) is required as a cofactor. Phosphorylated on both serine and threonine residues. Small t antigen inhibits the dephosphorylation by the AC form of PP2A. Post-translationally, O-Glycosylated near the C-terminal region. In terms of processing, acetylated by CBP in a TP53-dependent manner.

The protein resides in the host nucleus. The enzyme catalyses Couples ATP hydrolysis with the unwinding of duplex DNA by translocating in the 3'-5' direction.. It catalyses the reaction ATP + H2O = ADP + phosphate + H(+). Its function is as follows. Isoform large T antigen is a key early protein essential for both driving viral replication and inducing cellular transformation. Plays a role in viral genome replication by driving entry of quiescent cells into the cell cycle and by autoregulating the synthesis of viral early mRNA. Displays highly oncogenic activities by corrupting the host cellular checkpoint mechanisms that guard cell division and the transcription, replication, and repair of DNA. Participates in the modulation of cellular gene expression preceeding viral DNA replication. This step involves binding to host key cell cycle regulators retinoblastoma protein RB1/pRb and TP53. Induces the disassembly of host E2F1 transcription factors from RB1, thus promoting transcriptional activation of E2F1-regulated S-phase genes. Inhibits host TP53 binding to DNA, abrogating the ability of TP53 to stimulate gene expression. Plays the role of a TFIID-associated factor (TAF) in transcription initiation for all three RNA polymerases, by stabilizing the TBP-TFIIA complex on promoters. Initiates viral DNA replication and unwinding via interactions with the viral origin of replication. Binds two adjacent sites in the SV40 origin. The replication fork movement is facilitated by Large T antigen helicase activity. Has processive 3'-5' DNA helicase activity which requires a short 3' single-stranded region and ATP. Activates the transcription of viral late mRNA, through host TBP and TFIIA stabilization. Interferes with histone deacetylation mediated by HDAC1, leading to activation of transcription. This chain is Large T antigen, found in JC polyomavirus (JCPyV).